A 425-amino-acid chain; its full sequence is Dihydroorotase (425 aa).

2 residues coordinate Zn(2+): H61 and H63. Substrate is bound by residues 63-65 (HLR) and N95. Zn(2+)-binding residues include K146, H175, H224, and D293. K146 bears the N6-carboxylysine mark. D293 is a catalytic residue. Residues H297 and 311 to 312 (PG) contribute to the substrate site.

This sequence belongs to the metallo-dependent hydrolases superfamily. DHOase family. Class I DHOase subfamily. Requires Zn(2+) as cofactor.

The enzyme catalyses (S)-dihydroorotate + H2O = N-carbamoyl-L-aspartate + H(+). It participates in pyrimidine metabolism; UMP biosynthesis via de novo pathway; (S)-dihydroorotate from bicarbonate: step 3/3. Functionally, catalyzes the reversible cyclization of carbamoyl aspartate to dihydroorotate. The protein is Dihydroorotase of Aeropyrum pernix (strain ATCC 700893 / DSM 11879 / JCM 9820 / NBRC 100138 / K1).